Here is a 399-residue protein sequence, read N- to C-terminus: Serine/threonine-protein kinase PknL (399 aa).

The Cytoplasmic portion of the chain corresponds to 1 to 368 (MVEAGTRDPL…FIWARQHARR (368 aa)). The Protein kinase domain occupies 19 to 278 (YLVQAKIASG…IAMGADLEAI (260 aa)). ATP contacts are provided by residues 25-33 (IASGGTSTV) and lysine 48. The active-site Proton acceptor is aspartate 142. A disordered region spans residues 312 to 346 (GQLGAKPVHHPTRQLTRQPGDCSEPASGSEPEHEP). Residues 369–389 (MVLVWVSVVLAITGLVASAAW) traverse the membrane as a helical segment. Over 390 to 399 (TIGSNLSGLL) the chain is Extracellular.

This sequence belongs to the protein kinase superfamily. Ser/Thr protein kinase family. Autophosphorylated.

It is found in the cell membrane. The enzyme catalyses L-seryl-[protein] + ATP = O-phospho-L-seryl-[protein] + ADP + H(+). It carries out the reaction L-threonyl-[protein] + ATP = O-phospho-L-threonyl-[protein] + ADP + H(+). The protein is Serine/threonine-protein kinase PknL (pknL) of Mycobacterium bovis (strain ATCC BAA-935 / AF2122/97).